Reading from the N-terminus, the 526-residue chain is Glucose-6-phosphate isomerase (526 aa).

Catalysis depends on Glu323, which acts as the Proton donor. Catalysis depends on residues His352 and Lys454.

Belongs to the GPI family.

The protein localises to the cytoplasm. The catalysed reaction is alpha-D-glucose 6-phosphate = beta-D-fructose 6-phosphate. Its pathway is carbohydrate biosynthesis; gluconeogenesis. It functions in the pathway carbohydrate degradation; glycolysis; D-glyceraldehyde 3-phosphate and glycerone phosphate from D-glucose: step 2/4. In terms of biological role, catalyzes the reversible isomerization of glucose-6-phosphate to fructose-6-phosphate. This is Glucose-6-phosphate isomerase from Prochlorococcus marinus subsp. pastoris (strain CCMP1986 / NIES-2087 / MED4).